The sequence spans 723 residues: Probable dipeptidyl-peptidase 5 (723 aa).

The signal sequence occupies residues 1–19 (MAALRWLSAVVAVSTTVLA). Asn-79, Asn-97, Asn-154, Asn-255, Asn-381, and Asn-451 each carry an N-linked (GlcNAc...) asparagine glycan. Catalysis depends on Ser-561, which acts as the Charge relay system. The N-linked (GlcNAc...) asparagine glycan is linked to Asn-608. Active-site charge relay system residues include Asp-644 and His-676.

It belongs to the peptidase S9C family.

The protein resides in the secreted. In terms of biological role, extracellular dipeptidyl-peptidase which removes N-terminal dipeptides sequentially from polypeptides having unsubstituted N-termini. The sequence is that of Probable dipeptidyl-peptidase 5 (dpp5) from Aspergillus terreus (strain NIH 2624 / FGSC A1156).